The sequence spans 212 residues: Large ribosomal subunit protein uL4 (212 aa).

The tract at residues 45–71 is disordered; the sequence is RQGNASTKTRAEVRGGGRKPWRQKGTG. Positions 60–71 are enriched in basic residues; it reads GGRKPWRQKGTG.

The protein belongs to the universal ribosomal protein uL4 family. As to quaternary structure, part of the 50S ribosomal subunit.

One of the primary rRNA binding proteins, this protein initially binds near the 5'-end of the 23S rRNA. It is important during the early stages of 50S assembly. It makes multiple contacts with different domains of the 23S rRNA in the assembled 50S subunit and ribosome. In terms of biological role, forms part of the polypeptide exit tunnel. The protein is Large ribosomal subunit protein uL4 of Nostoc punctiforme (strain ATCC 29133 / PCC 73102).